The following is a 391-amino-acid chain: Phosphoglycerate kinase (391 aa).

Residues 21 to 23 (DLN), Arg-36, 59 to 62 (HLGR), Arg-113, and Arg-146 each bind substrate. Residues Lys-197, Glu-319, and 345 to 348 (GGDT) contribute to the ATP site.

It belongs to the phosphoglycerate kinase family. As to quaternary structure, monomer.

Its subcellular location is the cytoplasm. It catalyses the reaction (2R)-3-phosphoglycerate + ATP = (2R)-3-phospho-glyceroyl phosphate + ADP. It participates in carbohydrate degradation; glycolysis; pyruvate from D-glyceraldehyde 3-phosphate: step 2/5. The sequence is that of Phosphoglycerate kinase from Shewanella sp. (strain MR-7).